The chain runs to 316 residues: 4-hydroxy-3-methylbut-2-enyl diphosphate reductase (316 aa).

Cysteine 12 contributes to the [4Fe-4S] cluster binding site. Histidine 43 and histidine 81 together coordinate (2E)-4-hydroxy-3-methylbut-2-enyl diphosphate. Residues histidine 43 and histidine 81 each coordinate dimethylallyl diphosphate. The isopentenyl diphosphate site is built by histidine 43 and histidine 81. Position 103 (cysteine 103) interacts with [4Fe-4S] cluster. Histidine 131 serves as a coordination point for (2E)-4-hydroxy-3-methylbut-2-enyl diphosphate. Histidine 131 provides a ligand contact to dimethylallyl diphosphate. Residue histidine 131 participates in isopentenyl diphosphate binding. Residue glutamate 133 is the Proton donor of the active site. Threonine 170 provides a ligand contact to (2E)-4-hydroxy-3-methylbut-2-enyl diphosphate. Residue cysteine 198 coordinates [4Fe-4S] cluster. (2E)-4-hydroxy-3-methylbut-2-enyl diphosphate is bound by residues serine 226, asparagine 228, and serine 271. The dimethylallyl diphosphate site is built by serine 226, asparagine 228, and serine 271. The isopentenyl diphosphate site is built by serine 226, asparagine 228, and serine 271.

It belongs to the IspH family. The cofactor is [4Fe-4S] cluster.

It carries out the reaction isopentenyl diphosphate + 2 oxidized [2Fe-2S]-[ferredoxin] + H2O = (2E)-4-hydroxy-3-methylbut-2-enyl diphosphate + 2 reduced [2Fe-2S]-[ferredoxin] + 2 H(+). It catalyses the reaction dimethylallyl diphosphate + 2 oxidized [2Fe-2S]-[ferredoxin] + H2O = (2E)-4-hydroxy-3-methylbut-2-enyl diphosphate + 2 reduced [2Fe-2S]-[ferredoxin] + 2 H(+). It participates in isoprenoid biosynthesis; dimethylallyl diphosphate biosynthesis; dimethylallyl diphosphate from (2E)-4-hydroxy-3-methylbutenyl diphosphate: step 1/1. It functions in the pathway isoprenoid biosynthesis; isopentenyl diphosphate biosynthesis via DXP pathway; isopentenyl diphosphate from 1-deoxy-D-xylulose 5-phosphate: step 6/6. Catalyzes the conversion of 1-hydroxy-2-methyl-2-(E)-butenyl 4-diphosphate (HMBPP) into a mixture of isopentenyl diphosphate (IPP) and dimethylallyl diphosphate (DMAPP). Acts in the terminal step of the DOXP/MEP pathway for isoprenoid precursor biosynthesis. The protein is 4-hydroxy-3-methylbut-2-enyl diphosphate reductase of Bacillus thuringiensis (strain Al Hakam).